Reading from the N-terminus, the 96-residue chain is Integration host factor subunit beta (96 aa).

The protein belongs to the bacterial histone-like protein family. As to quaternary structure, heterodimer of an alpha and a beta chain.

Functionally, this protein is one of the two subunits of integration host factor, a specific DNA-binding protein that functions in genetic recombination as well as in transcriptional and translational control. This is Integration host factor subunit beta from Dichelobacter nodosus (strain VCS1703A).